The primary structure comprises 1590 residues: Pentafunctional AROM polypeptide (1590 aa).

The tract at residues 1-400 (MSTANGSSPT…HEPKASSVDD (400 aa)) is 3-dehydroquinate synthase. NAD(+) contacts are provided by residues 49 to 51 (DTN), 96 to 99 (EGSK), 127 to 129 (GGV), and D132. R143 is a binding site for 7-phospho-2-dehydro-3-deoxy-D-arabino-heptonate. 152–153 (TT) is an NAD(+) binding site. 7-phospho-2-dehydro-3-deoxy-D-arabino-heptonate is bound by residues D159 and K165. Position 174 (K174) interacts with NAD(+). N175 serves as a coordination point for 7-phospho-2-dehydro-3-deoxy-D-arabino-heptonate. NAD(+)-binding positions include 192–195 (FLNT) and N203. A Zn(2+)-binding site is contributed by E207. Residues 207–210 (EVIK) and K266 contribute to the 7-phospho-2-dehydro-3-deoxy-D-arabino-heptonate site. The active-site Proton acceptor; for 3-dehydroquinate synthase activity is the E276. 7-phospho-2-dehydro-3-deoxy-D-arabino-heptonate-binding positions include 280–284 (RNLLN) and H287. H287 serves as a coordination point for Zn(2+). The active-site Proton acceptor; for 3-dehydroquinate synthase activity is the H291. 7-phospho-2-dehydro-3-deoxy-D-arabino-heptonate is bound by residues H303 and K372. H303 is a binding site for Zn(2+). The segment at 413-856 (VQPGVRPGLK…WDVLSGVFGV (444 aa)) is EPSP synthase. The For EPSP synthase activity role is filled by C838. The shikimate kinase stretch occupies residues 876-1070 (NRSVFVIGMR…KAKPHSFFVS (195 aa)). 883–890 (GMRGAGKS) is an ATP binding site. The segment at 1071–1285 (LTVPNITAHT…AAPGQLTAAE (215 aa)) is 3-dehydroquinase. H1187 (proton acceptor; for 3-dehydroquinate dehydratase activity) is an active-site residue. Residue K1215 is the Schiff-base intermediate with substrate; for 3-dehydroquinate dehydratase activity of the active site. Residues 1298–1590 (KRKFYLFGKP…IVMNGTSDSS (293 aa)) are shikimate dehydrogenase.

It in the N-terminal section; belongs to the sugar phosphate cyclases superfamily. Dehydroquinate synthase family. The protein in the 2nd section; belongs to the EPSP synthase family. This sequence in the 3rd section; belongs to the shikimate kinase family. In the 4th section; belongs to the type-I 3-dehydroquinase family. It in the C-terminal section; belongs to the shikimate dehydrogenase family. Homodimer. Requires Zn(2+) as cofactor.

It is found in the cytoplasm. The enzyme catalyses 7-phospho-2-dehydro-3-deoxy-D-arabino-heptonate = 3-dehydroquinate + phosphate. It carries out the reaction 3-dehydroquinate = 3-dehydroshikimate + H2O. The catalysed reaction is shikimate + NADP(+) = 3-dehydroshikimate + NADPH + H(+). It catalyses the reaction shikimate + ATP = 3-phosphoshikimate + ADP + H(+). The enzyme catalyses 3-phosphoshikimate + phosphoenolpyruvate = 5-O-(1-carboxyvinyl)-3-phosphoshikimate + phosphate. The protein operates within metabolic intermediate biosynthesis; chorismate biosynthesis; chorismate from D-erythrose 4-phosphate and phosphoenolpyruvate: step 2/7. Its pathway is metabolic intermediate biosynthesis; chorismate biosynthesis; chorismate from D-erythrose 4-phosphate and phosphoenolpyruvate: step 3/7. It functions in the pathway metabolic intermediate biosynthesis; chorismate biosynthesis; chorismate from D-erythrose 4-phosphate and phosphoenolpyruvate: step 4/7. It participates in metabolic intermediate biosynthesis; chorismate biosynthesis; chorismate from D-erythrose 4-phosphate and phosphoenolpyruvate: step 5/7. The protein operates within metabolic intermediate biosynthesis; chorismate biosynthesis; chorismate from D-erythrose 4-phosphate and phosphoenolpyruvate: step 6/7. In terms of biological role, the AROM polypeptide catalyzes 5 consecutive enzymatic reactions in prechorismate polyaromatic amino acid biosynthesis. In Pyricularia oryzae (strain 70-15 / ATCC MYA-4617 / FGSC 8958) (Rice blast fungus), this protein is Pentafunctional AROM polypeptide.